A 495-amino-acid chain; its full sequence is Aspartyl/glutamyl-tRNA(Asn/Gln) amidotransferase subunit B (495 aa).

Belongs to the GatB/GatE family. GatB subfamily. Heterotrimer of A, B and C subunits.

It catalyses the reaction L-glutamyl-tRNA(Gln) + L-glutamine + ATP + H2O = L-glutaminyl-tRNA(Gln) + L-glutamate + ADP + phosphate + H(+). The enzyme catalyses L-aspartyl-tRNA(Asn) + L-glutamine + ATP + H2O = L-asparaginyl-tRNA(Asn) + L-glutamate + ADP + phosphate + 2 H(+). Functionally, allows the formation of correctly charged Asn-tRNA(Asn) or Gln-tRNA(Gln) through the transamidation of misacylated Asp-tRNA(Asn) or Glu-tRNA(Gln) in organisms which lack either or both of asparaginyl-tRNA or glutaminyl-tRNA synthetases. The reaction takes place in the presence of glutamine and ATP through an activated phospho-Asp-tRNA(Asn) or phospho-Glu-tRNA(Gln). In Methanosarcina acetivorans (strain ATCC 35395 / DSM 2834 / JCM 12185 / C2A), this protein is Aspartyl/glutamyl-tRNA(Asn/Gln) amidotransferase subunit B.